A 203-amino-acid polypeptide reads, in one-letter code: GTP-binding protein YPTM2 (203 aa).

GTP is bound by residues Gly15–Cys23, Tyr33–Thr40, Asp63–Gln67, Asn121–Asp124, and Ser151–Lys153. Residues Tyr37 to Phe45 carry the Effector region motif. 2 S-geranylgeranyl cysteine lipidation sites follow: Cys200 and Cys201.

Belongs to the small GTPase superfamily. Rab family. As to expression, its expression is weak in stems, higher in roots, leaves and coleoptiles, but highest in flowers.

It is found in the cell membrane. Protein transport. Probably involved in vesicular traffic. The sequence is that of GTP-binding protein YPTM2 (YPTM2) from Zea mays (Maize).